We begin with the raw amino-acid sequence, 1217 residues long: Disease resistance protein RPS4 (1217 aa).

Residues P14–L175 enclose the TIR domain. R23–R28 serves as a coordination point for NAD(+). Positions S33 to H34 are important for interaction with RRS1. Residue E88 is part of the active site. The NB-ARC domain maps to E211 to E472. LRR repeat units follow at residues M581–I606, L614–P636, I637–T659, A682–M706, M708–L728, I729–S749, D750–R774, L796–I818, S819–Y842, L843–Q860, and L861–C887. The segment at T1161–T1195 is disordered. The Nuclear localization signal signature appears at N1170 to M1177.

This sequence belongs to the disease resistance TIR-NB-LRR family. Interacts with EDS1. Interacts with SRFR1. Interacts with RRS1.

Its subcellular location is the endomembrane system. The protein resides in the cytoplasm. It localises to the nucleus. The enzyme catalyses NAD(+) + H2O = ADP-D-ribose + nicotinamide + H(+). Disease resistance (R) protein that specifically recognizes the AvrRps4 type III effector avirulence protein from P.syringae. Resistance proteins guard the plant against pathogens that contain an appropriate avirulence protein via an indirect interaction with this avirulence protein. That triggers a defense system including the hypersensitive response, which restricts the pathogen growth. Probably acts as a NAD(+) hydrolase (NADase): in response to activation, catalyzes cleavage of NAD(+) into ADP-D-ribose (ADPR) and nicotinamide; NAD(+) cleavage triggering a defense system that promotes cell death. The combined presence of both regular and alternative RPS4 transcripts with truncated open reading frames (ORFs) is necessary for function. RPS4 function is regulated at multiple levels, including gene expression, alternative splicing, and protein stability. When over-expressed, confers temperature-conditioned EDS1-dependent auto-immunity. Heterodimerization with RRS1 is required to form a functional complex to recognize AvrRps4 and PopP2. Abscisic acid deficiency enhances nuclear accumulation of RPS4 and its cell death-inducing activity. The sequence is that of Disease resistance protein RPS4 from Arabidopsis thaliana (Mouse-ear cress).